The primary structure comprises 132 residues: Small ribosomal subunit protein uS11 (132 aa).

The disordered stretch occupies residues 1 to 24 (MAAQKQAARKPRRRDRKSVPVGQA). Positions 7–16 (AARKPRRRDR) are enriched in basic residues.

This sequence belongs to the universal ribosomal protein uS11 family. As to quaternary structure, part of the 30S ribosomal subunit. Interacts with proteins S7 and S18. Binds to IF-3.

Located on the platform of the 30S subunit, it bridges several disparate RNA helices of the 16S rRNA. Forms part of the Shine-Dalgarno cleft in the 70S ribosome. The chain is Small ribosomal subunit protein uS11 from Bifidobacterium adolescentis (strain ATCC 15703 / DSM 20083 / NCTC 11814 / E194a).